We begin with the raw amino-acid sequence, 536 residues long: Cytochrome P450 monooxygenase phqM (536 aa).

C464 contributes to the heme binding site.

The protein belongs to the cytochrome P450 family. It depends on heme as a cofactor.

It participates in alkaloid biosynthesis. Its function is as follows. Cytochrome P450 monooxygenase; part of the gene cluster that mediates the biosynthesis of paraherquamide, a fungal indole alkaloid that belongs to a family of natural products containing a characteristic bicyclo[2.2.2]diazaoctane core. The first steps in the biosynthesis of paraherquamide is the production of the beta-methyl-proline precursor from L-isoleucine. They require oxidation of a terminally hydroxylated L-isoleucine to the corresponding aldehyde by enzymes which have still to be identified. Spontaneous cyclization and dehydration would yield the 4-methyl pyrolline-5-carboxylic acid, which is then reduced by the pyrroline-5-carboxylate reductase phqD leading to the beta-methyl-proline precursor. The next step of paraherquamide biosynthesis involves coupling of beta-methyl-proline and L-tryptophan by the bimodular NRPS phqB, to produce a monooxopiperazine intermediate. The reductase (R) domain of phqB utilizes NADPH for hydride transfer to reduce the thioester bond of the T domain-tethered linear dipeptide to a hemithioaminal intermediate, which spontaneously cleaves the C-S bond to release the aldehyde product. This compound undergoes spontaneous cyclization and dehydration to give a dienamine which is reverse prenylated at C-2 by the reverse prenyltransferase phqJ. The other prenyltransferase present in the cluster, phqI may be a redundant gene in the pathway. During biosynthetic assembly, the key step to produce the polycyclic core is catalyzed by the bifunctional reductase and intramolecular [4+2] Diels-Alderase, phqE, resulting in formation of the [2.2.2] diazaoctane intermediate preparaherquamide. Following formation of preparaherquamide, an indole 2,3-epoxidation-initiated pinacol-like rearrangement is catalyzed by the phqK FAD-dependent monooxygenase. The prenyltransferase phqA, the cytochrome P450 monooxygenase phqL, and the FAD-linked oxidoreductase phqH (or the cytochrome P450 monooxygenase phqM), are proposed to be involved in the formation of the pyran ring. The FAD-dependent monooxygenase phqK is likely responsible for generation of the spiro-oxindole, and the N-methylation is likely mediated by the phqN methyltransferase leading to the isolable natural product paraherquamide F. However, the order of these biosynthetic steps has still to be determined. In late-stage paraherquamide biosynthesis, the third P450 monooxygenase, phqO, is probably responsible for the C-14 hydroxylation, transforming paraherquamide F to paraherquamide G, and paraherquamide E to the final product paraherquamide A. The expansion from the 6-membered ring pyran (in paraherquamides F and G) to the 7-membered dioxepin ring (in paraherquamides A and E) represents a poorly understood but intriguing process that probably involves the 2-oxoglutarate-dependent dioxygenase phqC. Finally, the remaining members of the paraherquamide cluster, including phqI as well as phqM (or phqH), do not have a clearly prescribed role and appear to be redundant. The protein is Cytochrome P450 monooxygenase phqM of Penicillium fellutanum.